A 128-amino-acid polypeptide reads, in one-letter code: Large ribosomal subunit protein eL22 (128 aa).

At Thr-62 the chain carries Phosphothreonine. A Phosphoserine modification is found at Ser-66. Lys-69 carries the post-translational modification N6-succinyllysine.

Belongs to the eukaryotic ribosomal protein eL22 family. Component of the large ribosomal subunit.

It localises to the cytoplasm. Component of the large ribosomal subunit. The ribosome is a large ribonucleoprotein complex responsible for the synthesis of proteins in the cell. In Sus scrofa (Pig), this protein is Large ribosomal subunit protein eL22 (RPL22).